A 321-amino-acid polypeptide reads, in one-letter code: MARNKIALIGAGQIGGTLALLAGMKALGDIVLFDVAEGVPEGKALDLAELTPVEGFDAAYAGASSYDAISGADVVIVTAGVARKPGMSRDDLLAINLKVMEQVGAGIRKYAPDAFVICITNPLDAMVWALQRSSGLPPEKVVGMAGVLDSARLRYFLAEEFGVSVEDVTAFVMGGHGDTMVPLVRYSTVGGIPVPDLIRMGWTSEERIAAIVQRTRDGGAEIVNLLKSGSAFYAPAASAIAMAESYLRDKKRVLPVAALLDGEYGLRDIYVGVPAVIGARGVERIVEVELDRSERAMFDRSVAAVEGLVEACLKIAPGLGK.

Residues 10-15 and Asp-34 contribute to the NAD(+) site; that span reads GAGQIG. Residues Arg-83 and Arg-89 each contribute to the substrate site. Residues Asn-96 and 119 to 121 contribute to the NAD(+) site; that span reads ITN. Substrate contacts are provided by Asn-121 and Arg-152. Residue His-176 is the Proton acceptor of the active site.

It belongs to the LDH/MDH superfamily. MDH type 3 family.

It carries out the reaction (S)-malate + NAD(+) = oxaloacetate + NADH + H(+). In terms of biological role, catalyzes the reversible oxidation of malate to oxaloacetate. The chain is Malate dehydrogenase from Xanthobacter autotrophicus (strain ATCC BAA-1158 / Py2).